We begin with the raw amino-acid sequence, 554 residues long: Urocanate hydratase (554 aa).

Residues 51 to 52, Gln129, 175 to 177, Glu195, Arg200, 241 to 242, 262 to 266, 272 to 273, and Tyr321 each bind NAD(+); these read GG, GMG, NA, QTSAH, and YL. Cys409 is a catalytic residue. Gly491 provides a ligand contact to NAD(+).

The protein belongs to the urocanase family. NAD(+) serves as cofactor.

The protein localises to the cytoplasm. It carries out the reaction 4-imidazolone-5-propanoate = trans-urocanate + H2O. The protein operates within amino-acid degradation; L-histidine degradation into L-glutamate; N-formimidoyl-L-glutamate from L-histidine: step 2/3. Functionally, catalyzes the conversion of urocanate to 4-imidazolone-5-propionate. The polypeptide is Urocanate hydratase (Caulobacter sp. (strain K31)).